A 400-amino-acid polypeptide reads, in one-letter code: Formate-dependent phosphoribosylglycinamide formyltransferase (400 aa).

N(1)-(5-phospho-beta-D-ribosyl)glycinamide-binding positions include 22–23 (EL) and Glu82. Residues Arg115, Lys157, 162–167 (SSGKGQ), 197–200 (EGFV), and Glu205 contribute to the ATP site. The region spanning 120-315 (RLAAETLGLP…EFELHARAIL (196 aa)) is the ATP-grasp domain. Glu274 and Glu286 together coordinate Mg(2+). N(1)-(5-phospho-beta-D-ribosyl)glycinamide-binding positions include Asp293, Lys362, and 369–370 (RR).

The protein belongs to the PurK/PurT family. Homodimer.

It carries out the reaction N(1)-(5-phospho-beta-D-ribosyl)glycinamide + formate + ATP = N(2)-formyl-N(1)-(5-phospho-beta-D-ribosyl)glycinamide + ADP + phosphate + H(+). The protein operates within purine metabolism; IMP biosynthesis via de novo pathway; N(2)-formyl-N(1)-(5-phospho-D-ribosyl)glycinamide from N(1)-(5-phospho-D-ribosyl)glycinamide (formate route): step 1/1. Involved in the de novo purine biosynthesis. Catalyzes the transfer of formate to 5-phospho-ribosyl-glycinamide (GAR), producing 5-phospho-ribosyl-N-formylglycinamide (FGAR). Formate is provided by PurU via hydrolysis of 10-formyl-tetrahydrofolate. This Mycolicibacterium gilvum (strain PYR-GCK) (Mycobacterium gilvum (strain PYR-GCK)) protein is Formate-dependent phosphoribosylglycinamide formyltransferase.